The sequence spans 472 residues: Glutamine synthetase (472 aa).

Positions 13-101 constitute a GS beta-grasp domain; sequence SKARFVDLRF…TCDVIDPADG (89 aa). Residues 108-472 form the GS catalytic domain; it reads PRSIARRAEA…PLEFEMYYSL (365 aa). Mg(2+) contacts are provided by Glu-133 and Glu-135. Position 211 (Glu-211) interacts with ATP. Mg(2+)-binding residues include Glu-216 and Glu-224. Residues 268-269 and Gly-269 each bind L-glutamate; that span reads NG. Mg(2+) is bound at residue His-273. ATP-binding positions include 275 to 277 and Ser-277; that span reads HQS. Arg-325, Glu-331, and Arg-343 together coordinate L-glutamate. Residues Arg-343, Arg-348, and Lys-356 each coordinate ATP. Glu-361 serves as a coordination point for Mg(2+). Arg-363 serves as a coordination point for L-glutamate. Tyr-401 carries the O-AMP-tyrosine modification.

It belongs to the glutamine synthetase family. In terms of assembly, oligomer of 12 subunits arranged in the form of two hexameric ring. Mg(2+) serves as cofactor.

It localises to the cytoplasm. The enzyme catalyses L-glutamate + NH4(+) + ATP = L-glutamine + ADP + phosphate + H(+). Its activity is regulated as follows. The activity of this enzyme could be controlled by adenylation under conditions of abundant glutamine. Its function is as follows. Catalyzes the ATP-dependent biosynthesis of glutamine from glutamate and ammonia. The sequence is that of Glutamine synthetase from Neisseria gonorrhoeae.